We begin with the raw amino-acid sequence, 664 residues long: MPEEKNTFYITTPIYYPSGKAHIGHAYTTVAGDAMARYKRLKGYDVFYLTGTDEHGQKIQAKAKERGISEQEYVDEIAEGFQELWKKLEISNTDFIRTTQDRHKTSVEKIFEQLLEQGDIYLGEYEGWYSVSDEEYFTETQLEEVYKDENGKVIGGKAPSGNEVELVKEESYFFRMSKYADRLVEYYNSHPEFILPESRKNEMINNFIKPGLEDLAVSRTTFDWGIKVPGNPKHVVYVWIDALSNYITALGYNTDNDTKFQKYWPADVQIVGKEIVRFHTIYWPIMLMALDLPLPKMVFGHGWILMKDGKMSKSKGNVVDPYMLIDRYGLDALRYYLLREVPFGSDGLFTPEDFVDRVNYDLANDLGNLLNRTVAMINKYFDGEIPAYQGNVTEFDQTLVDFKNNVVKEYEGSMDHMQFSVALNQLWSLISRTNKYIDETAPWALAKEEDKRTELASVMTHLAENLRIIAVLLQPFLTRTPGEIFLQLGLQEENLKKWDSIYGYGEIPEGTTVVKKGTPIFPRLDAEVEVTYIQDEMKGSAPAPAEETAEVEALETPQIGIEDFDKIDLRVAEVKQVDKVKKADKLLCFQLDLGEGKLRQVLSGIAEFYQPEELIGKKVIVVSNLKPVKLRGLMSEGMILSGEKDGKLSVIEANSALPNGAKVK.

The short motif at 15–25 (YYPSGKAHIGH) is the 'HIGH' region element. Residues 310–314 (KMSKS) carry the 'KMSKS' region motif. Lys313 contributes to the ATP binding site. The region spanning 563-664 (DFDKIDLRVA…SALPNGAKVK (102 aa)) is the tRNA-binding domain.

Belongs to the class-I aminoacyl-tRNA synthetase family. MetG type 2B subfamily. As to quaternary structure, homodimer.

The protein resides in the cytoplasm. The catalysed reaction is tRNA(Met) + L-methionine + ATP = L-methionyl-tRNA(Met) + AMP + diphosphate. Functionally, is required not only for elongation of protein synthesis but also for the initiation of all mRNA translation through initiator tRNA(fMet) aminoacylation. This is Methionine--tRNA ligase (metG) from Listeria innocua serovar 6a (strain ATCC BAA-680 / CLIP 11262).